Reading from the N-terminus, the 272-residue chain is Polar tube protein 2 (272 aa).

An N-terminal signal peptide occupies residues 1–21; that stretch reads MLLLFTVVTLVSAAQVAPVTP. An N-linked (GlcNAc...) asparagine glycan is attached at N134. Positions 231–272 are disordered; the sequence is RAIQKKEVKESSKDGEKSSTQNGEGTTDDEDGQQSPDGNGPE. The span at 234 to 247 shows a compositional bias: basic and acidic residues; that stretch reads QKKEVKESSKDGEK. The segment covering 263 to 272 has biased composition (polar residues); it reads QQSPDGNGPE.

The protein localises to the spore polar tube. Its function is as follows. Involved in formation of a polar tube through which the infectious agent is passed on to the host cell. The sequence is that of Polar tube protein 2 (PTP2) from Encephalitozoon hellem (Microsporidian parasite).